The chain runs to 353 residues: Photosystem II D2 protein (353 aa).

N-acetylthreonine is present on Thr2. The residue at position 2 (Thr2) is a Phosphothreonine. The helical transmembrane segment at 41-61 threads the bilayer; that stretch reads CAYFALGGWFTGTTFVTSWYT. Chlorophyll a is bound at residue His118. The chain crosses the membrane as a helical span at residues 125–141; that stretch reads GFMLRQFELARSVQLRP. Gln130 and Asn143 together coordinate pheophytin a. The helical transmembrane segment at 153 to 166 threads the bilayer; that stretch reads VFVSVFLIYPLGQS. His198 contributes to the chlorophyll a binding site. A helical membrane pass occupies residues 208 to 228; the sequence is AALLCAIHGATVENTLFEDGD. Positions 215 and 262 each coordinate a plastoquinone. His215 contacts Fe cation. Position 269 (His269) interacts with Fe cation. The chain crosses the membrane as a helical span at residues 279-295; the sequence is GLWMSALGVVGLALNLR.

The protein belongs to the reaction center PufL/M/PsbA/D family. In terms of assembly, PSII is composed of 1 copy each of membrane proteins PsbA, PsbB, PsbC, PsbD, PsbE, PsbF, PsbH, PsbI, PsbJ, PsbK, PsbL, PsbM, PsbT, PsbX, PsbY, PsbZ, Psb30/Ycf12, at least 3 peripheral proteins of the oxygen-evolving complex and a large number of cofactors. It forms dimeric complexes. The cofactor is The D1/D2 heterodimer binds P680, chlorophylls that are the primary electron donor of PSII, and subsequent electron acceptors. It shares a non-heme iron and each subunit binds pheophytin, quinone, additional chlorophylls, carotenoids and lipids. There is also a Cl(-1) ion associated with D1 and D2, which is required for oxygen evolution. The PSII complex binds additional chlorophylls, carotenoids and specific lipids..

The protein resides in the plastid. The protein localises to the chloroplast thylakoid membrane. It catalyses the reaction 2 a plastoquinone + 4 hnu + 2 H2O = 2 a plastoquinol + O2. In terms of biological role, photosystem II (PSII) is a light-driven water:plastoquinone oxidoreductase that uses light energy to abstract electrons from H(2)O, generating O(2) and a proton gradient subsequently used for ATP formation. It consists of a core antenna complex that captures photons, and an electron transfer chain that converts photonic excitation into a charge separation. The D1/D2 (PsbA/PsbD) reaction center heterodimer binds P680, the primary electron donor of PSII as well as several subsequent electron acceptors. D2 is needed for assembly of a stable PSII complex. The chain is Photosystem II D2 protein from Platanus occidentalis (Sycamore).